The chain runs to 141 residues: Large ribosomal subunit protein bL17 (141 aa).

Belongs to the bacterial ribosomal protein bL17 family. As to quaternary structure, part of the 50S ribosomal subunit. Contacts protein L32.

In Gluconacetobacter diazotrophicus (strain ATCC 49037 / DSM 5601 / CCUG 37298 / CIP 103539 / LMG 7603 / PAl5), this protein is Large ribosomal subunit protein bL17.